Consider the following 86-residue polypeptide: Teretoxin Tsu6.16 (86 aa).

The signal sequence occupies residues 1-21 (MATSGRLLCVCLVMGLVFESL). The propeptide occupies 22–46 (GYLTGREKRPAENLEASVQRRWYLN).

The protein belongs to the teretoxin M (TM) superfamily. Contains 3 disulfide bonds. Expressed by the venom duct.

The protein localises to the secreted. This is Teretoxin Tsu6.16 from Terebra subulata (Chocolate spotted auger).